The sequence spans 400 residues: Centrosomal protein CEP57L1 (400 aa).

At Ser-45 the chain carries Phosphoserine. Coiled-coil stretches lie at residues 47-111 (NNQA…KKDI) and 138-213 (NVER…QDRA). Disordered stretches follow at residues 222 to 261 (REPP…EPVS) and 314 to 400 (MESK…KWEQ). Residues 244–258 (RTTSQARANPQSSGE) are compositionally biased toward polar residues. Residues 261-345 (SICDSLSELL…EKIENSRINE (85 aa)) adopt a coiled-coil conformation. 2 stretches are compositionally biased toward basic and acidic residues: residues 314–342 (MESK…ENSR) and 391–400 (LRRDDIKWEQ).

It belongs to the translokin family.

Its subcellular location is the cytoplasm. The protein localises to the cytoskeleton. It localises to the microtubule organizing center. It is found in the centrosome. Functionally, centrosomal protein which may be required for microtubule attachment to centrosomes. The sequence is that of Centrosomal protein CEP57L1 (Cep57l1) from Mus musculus (Mouse).